Here is a 120-residue protein sequence, read N- to C-terminus: Large ribosomal subunit protein bL17 (120 aa).

The protein belongs to the bacterial ribosomal protein bL17 family. As to quaternary structure, part of the 50S ribosomal subunit. Contacts protein L32.

This is Large ribosomal subunit protein bL17 from Geobacillus kaustophilus (strain HTA426).